Consider the following 709-residue polypeptide: Anillin-like protein 3 (709 aa).

The region spanning 584–705 (DMEYRGFLHI…WLSAINDTLD (122 aa)) is the PH domain.

This Caenorhabditis elegans protein is Anillin-like protein 3 (ani-3).